Reading from the N-terminus, the 468-residue chain is Argininosuccinate lyase (468 aa).

Belongs to the lyase 1 family. Argininosuccinate lyase subfamily.

The protein localises to the cytoplasm. The catalysed reaction is 2-(N(omega)-L-arginino)succinate = fumarate + L-arginine. Its pathway is amino-acid biosynthesis; L-arginine biosynthesis; L-arginine from L-ornithine and carbamoyl phosphate: step 3/3. The sequence is that of Argininosuccinate lyase from Methanothermobacter thermautotrophicus (strain ATCC 29096 / DSM 1053 / JCM 10044 / NBRC 100330 / Delta H) (Methanobacterium thermoautotrophicum).